The sequence spans 126 residues: Alpha-1-purothionin (126 aa).

An N-terminal signal peptide occupies residues 1-16; it reads CLLILGLVLEQLQVEG. Intrachain disulfides connect C19-C55, C20-C47, C28-C45, and C32-C41. A propeptide spans 62-126 (acidic domain); it reads LALESNSDEP…DAGLPSLDAY (65 aa).

The protein belongs to the plant thionin (TC 1.C.44) family. 4 C-C subfamily.

The protein resides in the secreted. In terms of biological role, thionins are small plant proteins which are toxic to animal cells. They seem to exert their toxic effect at the level of the cell membrane. Their precise function is not known. This is Alpha-1-purothionin (THI1.1) from Triticum aestivum (Wheat).